The chain runs to 208 residues: Ribosomal RNA large subunit methyltransferase E (208 aa).

S-adenosyl-L-methionine-binding residues include G62, W64, D82, D98, and D123. The Proton acceptor role is filled by K163.

This sequence belongs to the class I-like SAM-binding methyltransferase superfamily. RNA methyltransferase RlmE family.

The protein resides in the cytoplasm. It catalyses the reaction uridine(2552) in 23S rRNA + S-adenosyl-L-methionine = 2'-O-methyluridine(2552) in 23S rRNA + S-adenosyl-L-homocysteine + H(+). Specifically methylates the uridine in position 2552 of 23S rRNA at the 2'-O position of the ribose in the fully assembled 50S ribosomal subunit. The polypeptide is Ribosomal RNA large subunit methyltransferase E (Idiomarina loihiensis (strain ATCC BAA-735 / DSM 15497 / L2-TR)).